We begin with the raw amino-acid sequence, 297 residues long: Aspartate carbamoyltransferase catalytic subunit (297 aa).

Residues R49 and T50 each coordinate carbamoyl phosphate. K77 contributes to the L-aspartate binding site. Residues R99, H129, and Q132 each coordinate carbamoyl phosphate. 2 residues coordinate L-aspartate: R162 and R215. Carbamoyl phosphate is bound by residues G256 and P257.

The protein belongs to the aspartate/ornithine carbamoyltransferase superfamily. ATCase family. As to quaternary structure, heterododecamer (2C3:3R2) of six catalytic PyrB chains organized as two trimers (C3), and six regulatory PyrI chains organized as three dimers (R2).

It carries out the reaction carbamoyl phosphate + L-aspartate = N-carbamoyl-L-aspartate + phosphate + H(+). Its pathway is pyrimidine metabolism; UMP biosynthesis via de novo pathway; (S)-dihydroorotate from bicarbonate: step 2/3. Catalyzes the condensation of carbamoyl phosphate and aspartate to form carbamoyl aspartate and inorganic phosphate, the committed step in the de novo pyrimidine nucleotide biosynthesis pathway. In Legionella pneumophila (strain Lens), this protein is Aspartate carbamoyltransferase catalytic subunit.